Here is a 490-residue protein sequence, read N- to C-terminus: MSEVTKNSLEKILPQLKCHFTWNLFKEDSVSRDLEDRVCNQIEFLNTEFKATMYNLLAYIKHLDGNNEAALECLRQAEELIQQEHADQAEIRSLVTWGNYAWVYYHLGRLSDAQIYVDKVKQTCKKFSNPYSIEYSELDCEEGWTQLKCGRNERAKVCFEKALEEKPNNPEFSSGLAIAMYHLDNHPEKQFSTDVLKQAIELSPDNQYVKVLLGLKLQKMNKEAEGEQFVEEALEKSPCQTDVLRSAAKFYRRKGDLDKAIELFQRVLESTPNNGYLYHQIGCCYKAKVRQMQNTGESEASGNKEMIEALKQYAMDYSNKALEKGLNPLNAYSDLAEFLETECYQTPFNKEVPDAEKQQSHQRYCNLQKYNGKSEDTAVQHGLEGLSISKKSTDKEEIKDQPQNVSENLLPQNAPNYWYLQGLIHKQNGDLLQAAKCYEKELGRLLRDAPSGIGSIFLSASELEDGSEEMGQGAVSSSPRELLSNSEQLN.

TPR repeat units lie at residues 51-84 (ATMY…IQQE), 94-127 (LVTW…CKKF), 136-169 (SELD…KPNN), 172-206 (FSSG…SPDN), 207-240 (QYVK…SPCQ), 241-274 (TDVL…TPNN), 415-448 (PNYW…LLRD), and 450-481 (PSGI…SPRE). 2 positions are modified to phosphoserine: serine 203 and serine 237. Positions 467 to 490 (SEEMGQGAVSSSPRELLSNSEQLN) are disordered. The span at 474–490 (AVSSSPRELLSNSEQLN) shows a compositional bias: polar residues. The residue at position 478 (serine 478) is a Phosphoserine.

This sequence belongs to the IFIT family. As to quaternary structure, component of an interferon-dependent multiprotein complex, at least composed of IFIT1, IFIT2 and IFIT3. Interacts with IFIT1 and IFIT2. Interacts (via N-terminus) with MAVS, TBK1, TRAF6 and RIGI. Interacts with COPS5. In terms of tissue distribution, expression significantly higher in peripheral blood mononuclear cells (PBMCs) and monocytes from systemic lupus erythematosus (SLE) patients than in those from healthy individuals (at protein level). Spleen, lung, leukocytes, lymph nodes, placenta, bone marrow and fetal liver.

It localises to the cytoplasm. Its subcellular location is the mitochondrion. Functionally, IFN-induced antiviral protein which acts as an inhibitor of cellular as well as viral processes, cell migration, proliferation, signaling, and viral replication. Enhances MAVS-mediated host antiviral responses by serving as an adapter bridging TBK1 to MAVS which leads to the activation of TBK1 and phosphorylation of IRF3 and phosphorylated IRF3 translocates into nucleus to promote antiviral gene transcription. Exhibits an antiproliferative activity via the up-regulation of cell cycle negative regulators CDKN1A/p21 and CDKN1B/p27. Normally, CDKN1B/p27 turnover is regulated by COPS5, which binds CDKN1B/p27 in the nucleus and exports it to the cytoplasm for ubiquitin-dependent degradation. IFIT3 sequesters COPS5 in the cytoplasm, thereby increasing nuclear CDKN1B/p27 protein levels. Up-regulates CDKN1A/p21 by down-regulating MYC, a repressor of CDKN1A/p21. Can negatively regulate the apoptotic effects of IFIT2. In Homo sapiens (Human), this protein is Interferon-induced protein with tetratricopeptide repeats 3 (IFIT3).